The sequence spans 172 residues: Stellate protein CG33236/CG33240/CG33244/CG33245 (172 aa).

This sequence belongs to the casein kinase 2 subunit beta family. Interacts in vitro with the casein kinase 2 alpha subunit (CkII-alpha). The relevance of such interaction is however unclear in vivo. As to expression, probably not expressed in wild-type flies. In males lacking the Y chromosome, it is testis-specific and constitutes the main component of star-shaped crystals.

Functionally, unknown. In males lacking the Y chromosome, its strong overexpression leads to the appearance of proteinaceous star-shaped crystals in the primary spermatocytes causing meiotic drive, possibly by interfering with normal casein kinase 2 activity. This is Stellate protein CG33236/CG33240/CG33244/CG33245 (Ste:CG33236) from Drosophila melanogaster (Fruit fly).